The following is a 68-amino-acid chain: Inhibitor of trypsin and hageman factor (68 aa).

The residue at position 1 (Ser-1) is an N-acetylserine. A disulfide bridge links Cys-3 with Cys-48.

It belongs to the protease inhibitor I13 (potato type I serine protease inhibitor) family.

In terms of biological role, specifically inhibits both trypsin and activated Hageman factor. The chain is Inhibitor of trypsin and hageman factor from Cucurbita maxima (Pumpkin).